The sequence spans 446 residues: Na(+)/H(+) antiporter NhaA (446 aa).

11 consecutive transmembrane segments (helical) span residues 23–43 (GGML…SPWG), 73–93 (LMTF…GLEI), 109–129 (LLPI…YYFM), 138–158 (GLAI…SLFG), 167–187 (VFLT…IALF), 193–213 (SVNY…GNFF), 219–239 (WFYI…GIHA), 314–334 (MVNY…SLTA), 348–368 (VLAG…WLVI), 381–401 (WVNL…SLFI), and 419–439 (GVIL…QFAL).

The protein belongs to the NhaA Na(+)/H(+) (TC 2.A.33) antiporter family.

Its subcellular location is the cell inner membrane. The catalysed reaction is Na(+)(in) + 2 H(+)(out) = Na(+)(out) + 2 H(+)(in). Na(+)/H(+) antiporter that extrudes sodium in exchange for external protons. This chain is Na(+)/H(+) antiporter NhaA, found in Phocaeicola vulgatus (strain ATCC 8482 / DSM 1447 / JCM 5826 / CCUG 4940 / NBRC 14291 / NCTC 11154) (Bacteroides vulgatus).